Reading from the N-terminus, the 294-residue chain is Tryptophan 2,3-dioxygenase (294 aa).

Substrate-binding positions include 63 to 67, tyrosine 125, and arginine 129; that span reads FIIQH. Residue histidine 252 coordinates heme. Substrate is bound at residue threonine 266.

The protein belongs to the tryptophan 2,3-dioxygenase family. In terms of assembly, homotetramer. Heme is required as a cofactor.

It catalyses the reaction L-tryptophan + O2 = N-formyl-L-kynurenine. It functions in the pathway amino-acid degradation; L-tryptophan degradation via kynurenine pathway; L-kynurenine from L-tryptophan: step 1/2. Its function is as follows. Heme-dependent dioxygenase that catalyzes the oxidative cleavage of the L-tryptophan (L-Trp) pyrrole ring and converts L-tryptophan to N-formyl-L-kynurenine. Catalyzes the oxidative cleavage of the indole moiety. This chain is Tryptophan 2,3-dioxygenase, found in Polaromonas sp. (strain JS666 / ATCC BAA-500).